Consider the following 419-residue polypeptide: C2 calcium-dependent domain-containing protein 4C (419 aa).

Disordered regions lie at residues 1-96 (MRKT…LASE), 115-136 (EDWT…MSLP), 151-225 (AESP…SPFG), and 247-300 (VSQL…HTVK). Residues 75-94 (LASPGPRRAPRSPRLPAKLA) show a composition bias toward low complexity. Gly residues predominate over residues 186–196 (KGNGGDGGSRE). The span at 212–225 (ESDTGSSAESSPFG) shows a compositional bias: polar residues. A phosphoserine mark is found at serine 259, serine 261, and serine 270. Residues 303–419 (TRGSVRLLAE…LPLTSLLPFL (117 aa)) form the C2 domain.

This sequence belongs to the C2CD4 family.

This chain is C2 calcium-dependent domain-containing protein 4C (C2cd4c), found in Mus musculus (Mouse).